The following is a 463-amino-acid chain: Glutamyl-tRNA reductase (463 aa).

Substrate-binding positions include 49–52 (TCNR), S109, 114–116 (EQQ), and Q120. Residue C50 is the Nucleophile of the active site. 196–201 (GAGAMS) is an NADP(+) binding site.

Belongs to the glutamyl-tRNA reductase family. As to quaternary structure, homodimer.

The enzyme catalyses (S)-4-amino-5-oxopentanoate + tRNA(Glu) + NADP(+) = L-glutamyl-tRNA(Glu) + NADPH + H(+). It participates in porphyrin-containing compound metabolism; protoporphyrin-IX biosynthesis; 5-aminolevulinate from L-glutamyl-tRNA(Glu): step 1/2. In terms of biological role, catalyzes the NADPH-dependent reduction of glutamyl-tRNA(Glu) to glutamate 1-semialdehyde (GSA). The chain is Glutamyl-tRNA reductase from Corynebacterium glutamicum (strain ATCC 13032 / DSM 20300 / JCM 1318 / BCRC 11384 / CCUG 27702 / LMG 3730 / NBRC 12168 / NCIMB 10025 / NRRL B-2784 / 534).